Consider the following 56-residue polypeptide: Conotoxin Bu12 (56 aa).

The first 2 residues, 1 to 2, serve as a signal peptide directing secretion; the sequence is TA. A propeptide spanning residues 3 to 25 is cleaved from the precursor; the sequence is EDSRGTQLHRALRKATKLPVSTR. 3 disulfides stabilise this stretch: C26-C40, C33-C44, and C39-C49.

The protein belongs to the conotoxin O1 superfamily. As to expression, expressed by the venom duct.

It is found in the secreted. This is Conotoxin Bu12 from Conus bullatus (Bubble cone).